We begin with the raw amino-acid sequence, 114 residues long: Replication initiation control protein YabA (114 aa).

Zn(2+) contacts are provided by His-79, Cys-81, Cys-95, and Cys-98.

The protein belongs to the YabA family. In terms of assembly, homotetramer. Interacts with both DnaA and DnaN, acting as a bridge between these two proteins. The cofactor is Zn(2+).

It is found in the cytoplasm. The protein resides in the nucleoid. Functionally, involved in control of chromosome replication initiation. Inhibits the cooperative binding of DnaA to the oriC region, thus negatively regulating initiation of chromosome replication. Inhibits the ability of DnaA-ATP to form a helix on DNA; does not disassemble preformed DnaA-DNA helices. Decreases the residence time of DnaA on the chromosome at its binding sites (oriC, replication forks and promoter-binding sites). Tethers DnaA to the replication machinery via the DNA polymerase beta sliding clamp subunit (dnaN). Associates with oriC and other DnaA targets on the chromosome in a DnaA-dependent manner. This Lactobacillus johnsonii (strain CNCM I-12250 / La1 / NCC 533) protein is Replication initiation control protein YabA.